The following is a 405-amino-acid chain: Phosphatidylinositol 5-phosphate 4-kinase type-2 alpha (405 aa).

Position 2 is an N-acetylalanine (A2). Phosphothreonine is present on T3. S14 carries the phosphoserine modification. A PIPK domain is found at 33–405 (ASDPLLSVLM…RFLDFIGHIL (373 aa)). Residues 59-65 (VMLMPDD) are required for interaction with PIP5K1A. An N6-acetyllysine mark is found at K89 and K145. The segment at 288-328 (QEEVECEENDGEEEGESDSTHPIGTPPDSPGNTLNSSPPLA) is disordered. The segment covering 289 to 304 (EEVECEENDGEEEGES) has biased composition (acidic residues).

Homodimer. Interacts with PIP4K2B; the interaction may regulate localization to the nucleus. Probably interacts with PIP5K1A; the interaction inhibits PIP5K1A kinase activity. Phosphorylated in tyrosines. Phosphorylation is induced by light and increases kinase activity. In terms of tissue distribution, detected in rod photoreceptor cells.

The protein resides in the cell membrane. Its subcellular location is the nucleus. The protein localises to the lysosome. It localises to the cytoplasm. It is found in the photoreceptor inner segment. The protein resides in the cell projection. Its subcellular location is the cilium. The protein localises to the photoreceptor outer segment. It carries out the reaction a 1,2-diacyl-sn-glycero-3-phospho-(1D-myo-inositol-5-phosphate) + ATP = a 1,2-diacyl-sn-glycero-3-phospho-(1D-myo-inositol-4,5-bisphosphate) + ADP + H(+). It catalyses the reaction 1,2-dihexadecanoyl-sn-glycero-3-phospho-(1D-myo-inositol-5-phosphate) + ATP = 1,2-dihexadecanoyl-sn-glycero-3-phospho-(1D-myo-inositol-4,5-bisphosphate) + ADP + H(+). The catalysed reaction is 1,2-dihexadecanoyl-sn-glycero-3-phospho-(1D-myo-inositol-5-phosphate) + GTP = 1,2-dihexadecanoyl-sn-glycero-3-phospho-(1D-myo-inositol-4,5-bisphosphate) + GDP + H(+). In rod outer segments, activated by light. Its function is as follows. Catalyzes the phosphorylation of phosphatidylinositol 5-phosphate (PtdIns5P) on the fourth hydroxyl of the myo-inositol ring, to form phosphatidylinositol 4,5-bisphosphate (PtdIns(4,5)P2). Has both ATP- and GTP-dependent kinase activities. May exert its function by regulating the levels of PtdIns5P, which functions in the cytosol by increasing AKT activity and in the nucleus signals through ING2. May regulate the pool of cytosolic PtdIns5P in response to the activation of tyrosine phosphorylation. Required for lysosome-peroxisome membrane contacts and intracellular cholesterol transport through modulating peroxisomal PtdIns(4,5)P2 level. In collaboration with PIP4K2B, has a role in mediating autophagy in times of nutrient stress. Required for autophagosome-lysosome fusion and the regulation of cellular lipid metabolism. Negatively regulates insulin signaling through a catalytic-independent mechanism. PIP4Ks interact with PIP5Ks and suppress PIP5K-mediated PtdIns(4,5)P2 synthesis and insulin-dependent conversion to PtdIns(3,4,5)P3. May be involved in thrombopoiesis, and the terminal maturation of megakaryocytes and regulation of their size. The chain is Phosphatidylinositol 5-phosphate 4-kinase type-2 alpha from Mus musculus (Mouse).